The following is a 372-amino-acid chain: F-box protein AFR (372 aa).

The segment covering 1–15 (MAEQETTSNINTIND) has biased composition (polar residues). A disordered region spans residues 1–27 (MAEQETTSNINTINDQAEEETRTKSQP). One can recognise an F-box domain in the interval 29-74 (ISGLPNDIAELCLLRLPYPYHALYRSVSSSWNKTITNPRFLFSKQS). 5 Kelch repeats span residues 80–126 (PYLF…HALS), 135–178 (KLFV…NVNG), 179–227 (KIMA…VIGK), 229–276 (MCVT…IRDR), and 279–325 (VISE…DRVF).

As to quaternary structure, part of a SCF (ASK-cullin-F-box) protein ligase complex. Interacts with SKP1A.

Its pathway is protein modification; protein ubiquitination. In terms of biological role, component of SCF (ASK-cullin-F-box) E3 ubiquitin ligase complexes, which may mediate the ubiquitination and subsequent proteasomal degradation of target proteins. Part of the phyA-mediated signaling transduction pathway leading to the regulation of gene expression and hypocotyls elongation in response to red and far-red light exposure. The chain is F-box protein AFR (AFR) from Arabidopsis thaliana (Mouse-ear cress).